The primary structure comprises 379 residues: tRNA-specific 2-thiouridylase MnmA (379 aa).

ATP is bound by residues 6 to 13 (AMSGGVDS) and leucine 32. Cysteine 101 (nucleophile) is an active-site residue. Cysteine 101 and cysteine 199 are oxidised to a cystine. Glycine 125 is an ATP binding site. Residues 148–150 (KDQ) form an interaction with tRNA region. The active-site Cysteine persulfide intermediate is cysteine 199.

It belongs to the MnmA/TRMU family.

The protein localises to the cytoplasm. The catalysed reaction is S-sulfanyl-L-cysteinyl-[protein] + uridine(34) in tRNA + AH2 + ATP = 2-thiouridine(34) in tRNA + L-cysteinyl-[protein] + A + AMP + diphosphate + H(+). In terms of biological role, catalyzes the 2-thiolation of uridine at the wobble position (U34) of tRNA, leading to the formation of s(2)U34. The protein is tRNA-specific 2-thiouridylase MnmA of Paenarthrobacter aurescens (strain TC1).